The primary structure comprises 303 residues: Trans-aconitate 2-methyltransferase (303 aa).

The interval E271 to R303 is disordered. Over residues G272 to R303 the composition is skewed to gly residues.

The protein belongs to the methyltransferase superfamily. Tam family.

Its subcellular location is the cytoplasm. It catalyses the reaction trans-aconitate + S-adenosyl-L-methionine = (E)-3-(methoxycarbonyl)pent-2-enedioate + S-adenosyl-L-homocysteine. Functionally, catalyzes the S-adenosylmethionine monomethyl esterification of trans-aconitate. In Streptomyces coelicolor (strain ATCC BAA-471 / A3(2) / M145), this protein is Trans-aconitate 2-methyltransferase.